The primary structure comprises 146 residues: Hemoglobin subunit beta-2 (146 aa).

The region spanning 2 to 146 is the Globin domain; the sequence is HWSAEEKQLI…VAHALARRYH (145 aa). Heme b is bound by residues His63 and His92.

The protein belongs to the globin family. As to quaternary structure, heterotetramer of two alpha chains and two beta chains. Red blood cells.

In terms of biological role, involved in oxygen transport from the lung to the various peripheral tissues. The polypeptide is Hemoglobin subunit beta-2 (HBB2) (Naja naja (Indian cobra)).